Reading from the N-terminus, the 2090-residue chain is Nuclear pore complex protein Nup214 (2090 aa).

Position 2 is an N-acetylglycine (Gly2). A Phosphoserine modification is found at Ser30. Blade repeat units lie at residues Leu41–Phe93, Pro94–Gly150, Met151–Val193, Ala194–His239, Pro240–His303, His304–Asp359, and Ser360–Ile404. The interval Leu41–Ile404 is seven-bladed beta propeller. The tract at residues Glu236–Ser1418 is 44 X 2 AA repeats of F-G. Thr416 bears the Phosphothreonine mark. Phosphoserine occurs at positions 421, 430, and 433. The disordered stretch occupies residues Leu422–Pro460. Residues Lys429–Ser441 are compositionally biased toward low complexity. Thr434, Thr437, and Thr439 each carry phosphothreonine. Positions Ser450–Asn586 are (Microbial infection) Binds human adenovirus 5 (HAdV-5) protein L3 (hexon). Positions Val481 to Gly2076 are 11 X 5 AA approximate repeats. Copy 1 of the repeat occupies Phe484–Gly485. Low complexity-rich tracts occupy residues Leu489–Pro513 and Pro524–Ala536. Residues Leu489 to Ala536 are disordered. The stretch at Phe548 to Gly549 is repeat 2. Low complexity-rich tracts occupy residues Ser597–Pro629 and Val637–Pro658. The interval Ser597–Asp700 is disordered. Ser651, Ser657, and Ser666 each carry phosphoserine. Phosphothreonine is present on Thr670. Residue Ser678 is modified to Phosphoserine. Positions Gln680–Gln1209 form a coiled coil. Over residues Lys691 to Asp700 the composition is skewed to basic and acidic residues. 2 leucine-zipper regions span residues Leu740 to Leu768 and Leu861 to Leu882. Ser760 is subject to Phosphoserine. Residues Ser940, Ser970, Ser974, and Ser989 each carry the phosphoserine modification. The interval Thr987–Val1009 is disordered. The span at Glu997–Glu1007 shows a compositional bias: basic and acidic residues. At Thr1021 the chain carries Phosphothreonine. Residues Ser1023, Ser1045, Ser1056, and Ser1081 each carry the phosphoserine modification. The span at Leu1128–Lys1149 shows a compositional bias: polar residues. The segment at Leu1128–His1152 is disordered. Phosphothreonine is present on residues Thr1134, Thr1150, and Thr1156. Composition is skewed to polar residues over residues Leu1168–Asp1188 and Ala1199–Pro1213. Positions Leu1168–Pro1213 are disordered. At Ser1181 the chain carries Phosphoserine. Repeat unit 3 spans residues Phe1225 to Gly1226. Composition is skewed to polar residues over residues Ser1234–Ala1254 and Pro1273–Pro1285. Disordered stretches follow at residues Ser1234–Lys1316 and Leu1337–Thr1408. Positions Pro1288 to Ser1299 are enriched in low complexity. The span at Thr1301–Leu1310 shows a compositional bias: polar residues. Thr1312 is modified (phosphothreonine). Positions Lys1347 to Val1368 are enriched in polar residues. The residue at position 1353 (Ser1353) is a Phosphoserine. A compositionally biased stretch (low complexity) spans Pro1386–Thr1408. Residues Ala1409–Gly2084 are 18 X 4 AA approximate repeats. 4 repeat units span residues Phe1411–Gly1412, Phe1427–Gly1428, Phe1441–Gly1442, and Phe1473–Gly1474. The segment at Phe1427 to Phe2085 is 11 X 3 AA approximate repeats. The segment covering Ser1438 to Val1450 has biased composition (polar residues). The tract at residues Ser1438–Ser1467 is disordered. Composition is skewed to low complexity over residues Ser1479 to Ala1489 and Ser1508 to Pro1527. Residues Ser1479–Lys1539 are disordered. Residue Lys1538 forms a Glycyl lysine isopeptide (Lys-Gly) (interchain with G-Cter in SUMO2) linkage. A run of 18 repeats spans residues Phe1635–Gly1636, Phe1674–Gly1675, Phe1686–Gly1687, Phe1713–Gly1714, Phe1721–Gly1722, Phe1726–Gly1727, Phe1732–Gly1733, Phe1756–Gly1757, Phe1772–Gly1773, Phe1786–Gly1787, Phe1798–Gly1799, Phe1806–Gly1807, Phe1812–Gly1813, Phe1819–Gly1820, Phe1842–Gly1843, Phe1851–Gly1852, Phe1862–Gly1863, and Phe1874–Gly1875. The interval Gly1884–Phe1903 is disordered. 5 repeat units span residues Phe1910–Gly1911, Phe1922–Gly1923, Phe1930–Gly1931, Phe1938–Gly1939, and Phe1959–Gly1960. Ser1963 carries the post-translational modification Phosphoserine. 3 consecutive repeat copies span residues Phe1970–Gly1971, Phe1976–Gly1977, and Phe1982–Gly1983. At Ser1985 the chain carries Phosphoserine. Tandem repeats lie at residues Phe1988–Gly1989, Phe1994–Gly1995, Phe2012–Gly2013, Phe2024–Gly2025, Phe2026–Gly2027, Phe2035–Gly2036, Phe2046–Gly2047, Phe2056–Gly2057, Phe2066–Gly2067, Phe2075–Gly2076, and Phe2085–Gly2086.

Homodimer. Part of the nuclear pore complex (NPC). Interacts with NUP88. Interacts with ZFP36; this interaction increases upon lipopolysaccharide (LPS) stimulation. Interacts with DDX19. Interacts with XPO1. Interacts with XPO5. In terms of assembly, (Microbial infection) Interacts with human herpes virus 1 (HHV-1) protein UL25; this interaction might be essential to the capsid docking onto the host nuclear pore. As to quaternary structure, (Microbial infection) Interacts (via N-terminus) with human adenovirus 5 (HAdV-5) protein L3 (hexon); this interaction might be essential for the release of the virus genome to the nucleus. Post-translationally, probably glycosylated as it reacts with wheat germ agglutinin (WGA). As to expression, expressed in thymus, spleen, bone marrow, kidney, brain and testis, but hardly in all other tissues or in whole embryos during development.

It is found in the nucleus. The protein localises to the nuclear pore complex. Its function is as follows. Part of the nuclear pore complex. Has a critical role in nucleocytoplasmic transport. May serve as a docking site in the receptor-mediated import of substrates across the nuclear pore complex. In terms of biological role, (Microbial infection) Required for capsid disassembly of the human adenovirus 5 (HadV-5) leading to release of the viral genome to the nucleus (in vitro). The sequence is that of Nuclear pore complex protein Nup214 (NUP214) from Homo sapiens (Human).